The sequence spans 302 residues: Cell division protein FtsQ (302 aa).

The Cytoplasmic segment spans residues 1–43 (MRPVDKKPVDRKIERETRYLRRDPAPSRWSYRYQRLMLTPAFR). Residues 44-64 (AGVRLGTPVIIIALAVAVVFG) form a helical membrane-spanning segment. Topologically, residues 65–302 (RADSRDWIMG…SMPGRSAGRG (238 aa)) are periplasmic. In terms of domain architecture, POTRA spans 89–156 (FMVGSFAITG…GVLQIVIEER (68 aa)).

The protein belongs to the FtsQ/DivIB family. FtsQ subfamily.

The protein resides in the cell inner membrane. Its function is as follows. Essential cell division protein. In Ketogulonicigenium vulgare (strain Y25), this protein is Cell division protein FtsQ.